The sequence spans 294 residues: tRNA dimethylallyltransferase (294 aa).

Residue 10 to 17 (GPTAVGKT) coordinates ATP. 12–17 (TAVGKT) lines the substrate pocket. An interaction with substrate tRNA region spans residues 35-38 (DSQQ).

The protein belongs to the IPP transferase family. As to quaternary structure, monomer. It depends on Mg(2+) as a cofactor.

The catalysed reaction is adenosine(37) in tRNA + dimethylallyl diphosphate = N(6)-dimethylallyladenosine(37) in tRNA + diphosphate. In terms of biological role, catalyzes the transfer of a dimethylallyl group onto the adenine at position 37 in tRNAs that read codons beginning with uridine, leading to the formation of N6-(dimethylallyl)adenosine (i(6)A). The protein is tRNA dimethylallyltransferase of Streptococcus pneumoniae serotype 4 (strain ATCC BAA-334 / TIGR4).